A 36-amino-acid polypeptide reads, in one-letter code: Pancreatic polypeptide (36 aa).

The residue at position 36 (Y36) is a Tyrosine amide.

The protein belongs to the NPY family.

It localises to the secreted. Functionally, hormone secreted by pancreatic cells that acts as a regulator of pancreatic and gastrointestinal functions probably by signaling through the G protein-coupled receptor NPY4R2. The sequence is that of Pancreatic polypeptide (PPY) from Macaca mulatta (Rhesus macaque).